The following is a 139-amino-acid chain: Chemical-damaging agent resistance protein B (139 aa).

It belongs to the CAPAB/TerDEXZ family.

Its function is as follows. Not known; could confer methyl methane sulfonate (MMS), mitomycin C (MC), and UV resistance. The sequence is that of Chemical-damaging agent resistance protein B from Clostridium acetobutylicum.